Consider the following 376-residue polypeptide: Protein-tyrosine sulfotransferase 2 (376 aa).

The Cytoplasmic portion of the chain corresponds to 1 to 8 (MRLSVRKV). Residues 9-25 (LLAVGCALALVLAVQLG) traverse the membrane as a helical; Signal-anchor for type II membrane protein segment. At 26-376 (QQVLECRAVL…NSTSPHLGSS (351 aa)) the chain is on the lumenal side. 77–81 (RSGTT) contributes to the 3'-phosphoadenylyl sulfate binding site. Cysteines 95 and 155 form a disulfide. Glutamate 98 (proton donor/acceptor) is an active-site residue. The segment at 100–104 (RIIPR) is interaction with peptide substrate. 3'-phosphoadenylyl sulfate is bound by residues arginine 182, serine 190, and arginine 194. Cysteine 224 and cysteine 232 are oxidised to a cystine. 3'-phosphoadenylyl sulfate is bound by residues tyrosine 237, 284–293 (STDQVIKPVN), and lysine 299. Residues asparagine 342 and asparagine 367 are each glycosylated (N-linked (GlcNAc...) asparagine).

It belongs to the protein sulfotransferase family. Homodimer. Can also form heterodimers with TPST1. N-glycosylated.

Its subcellular location is the golgi apparatus membrane. The catalysed reaction is L-tyrosyl-[protein] + 3'-phosphoadenylyl sulfate = O-sulfo-L-tyrosine-[protein] + adenosine 3',5'-bisphosphate + H(+). Its function is as follows. Catalyzes the O-sulfation of tyrosine residues within acidic motifs of polypeptides, using 3'-phosphoadenylyl sulfate (PAPS) as cosubstrate. This is Protein-tyrosine sulfotransferase 2 (Tpst2) from Rattus norvegicus (Rat).